Consider the following 205-residue polypeptide: MQHPTLQPEVDPNPVVSSSSSSSSSNPLPAHLNPANYPQTRYFSDSNIHLELTYNPLDPTKSLAQIRSPHAGANVLFLGTTRSTFDNRPVARLTYTSYAPLALRTLEKIARGAVTKYQLCGISISHRLGEVRVAEESIAIAVAAGHRRPAWRAGEEVLEECKAAVEIWKREEFIGAGAGEGEGEWRANRDTDSQGNCRGDKVAEG.

The interval methionine 1 to asparagine 36 is disordered. Residues histidine 146–arginine 147, lysine 162, and lysine 169–glutamate 171 each bind substrate. A disordered region spans residues glycine 179–glycine 205. A compositionally biased stretch (basic and acidic residues) spans glycine 183–glycine 205.

It belongs to the MoaE family. MOCS2B subfamily. In terms of assembly, heterotetramer; composed of 2 small (MOCS2A) and 2 large (MOCS2B) subunits.

It is found in the cytoplasm. The enzyme catalyses 2 [molybdopterin-synthase sulfur-carrier protein]-C-terminal-Gly-aminoethanethioate + cyclic pyranopterin phosphate + H2O = molybdopterin + 2 [molybdopterin-synthase sulfur-carrier protein]-C-terminal Gly-Gly + 2 H(+). The protein operates within cofactor biosynthesis; molybdopterin biosynthesis. In terms of biological role, catalytic subunit of the molybdopterin synthase complex, a complex that catalyzes the conversion of precursor Z into molybdopterin. Acts by mediating the incorporation of 2 sulfur atoms from thiocarboxylated MOCS2A into precursor Z to generate a dithiolene group. The chain is Molybdopterin synthase catalytic subunit from Ajellomyces capsulatus (strain NAm1 / WU24) (Darling's disease fungus).